The sequence spans 89 residues: Phosphocarrier protein HPr (89 aa).

An HPr domain is found at 1 to 88 (MLQRDTTIIN…ALIANRFGEG (88 aa)). The active-site Pros-phosphohistidine intermediate is histidine 15.

It belongs to the HPr family.

It is found in the cytoplasm. Its function is as follows. General (non sugar-specific) component of the phosphoenolpyruvate-dependent sugar phosphotransferase system (sugar PTS). This major carbohydrate active-transport system catalyzes the phosphorylation of incoming sugar substrates concomitantly with their translocation across the cell membrane. The phosphoryl group from phosphoenolpyruvate (PEP) is transferred to the phosphoryl carrier protein HPr by enzyme I. Phospho-HPr then transfers it to the PTS EIIA domain. The protein is Phosphocarrier protein HPr (phbH) of Cupriavidus necator (strain ATCC 17699 / DSM 428 / KCTC 22496 / NCIMB 10442 / H16 / Stanier 337) (Ralstonia eutropha).